Reading from the N-terminus, the 205-residue chain is MYGYGYTPAVVAPTVMSFSFVPPQAFQQCWFYSLYTQIQQAQLYEMQSWFMRVDANRSGTISSGELQYLNIGGTPLGIETATKLIKVFDHNKNGQIDFYEYAALHQFINNLYRCFVANDRNFSGTIDANEIYNALITSGFQLPFPTVNYLFLKLSPSGYGLLFTQFLNLCATVALTRSLFEWNDPMRTGVVHLNLAQLYDIIALV.

3 consecutive EF-hand domains span residues 45 to 75 (EMQS…GGTP), 76 to 111 (LGIE…INNL), and 119 to 141 (DRNF…SGFQ). Residues Asp54, Asn56, Ser58, Thr60, Glu65, Asp89, Asn91, Asn93, Gln95, and Glu100 each contribute to the Ca(2+) site.

The protein belongs to the Peflin/Sorcin family. As to quaternary structure, in contrast to pefA, does not form homodimers in presence of Ca(2+). May form heterodimers with pefA.

It is found in the cytoplasm. It localises to the membrane. This chain is Penta-EF hand domain-containing protein 2 (pefB), found in Dictyostelium discoideum (Social amoeba).